The primary structure comprises 214 residues: MTAIYILTMISKEFQKIWEGNQKVKIPKSKDPLKYRLVQAQYRVRSMVSRLDVYIGRMQERDKVLFERVVESQMSKDQSRAAMYANELAEIRKITKQLLTTQIALEQVSLRLETVTELGDIFANLIPVMGVINELKTSLKGVMPELSIELGELGEGLQEIVIEAGEFSGVSGISATYSPEARQILEEASVVAEQRMKEKFPSLPAAGITQQQKS.

Functionally, part of a cell division machinery. This is Cell division protein B1 from Sulfolobus acidocaldarius (strain ATCC 33909 / DSM 639 / JCM 8929 / NBRC 15157 / NCIMB 11770).